The sequence spans 324 residues: MTNSDWMPTASISQLKQRATLLRQIREFFAERNVLEVETPAMSHATVTDIHLHTFKTEFVGPGYAKGSALHLMTSPEFHMKRLLAAGSGCIYQLGKAFRNEENGRYHNPEFTMLEWYRIGFDHHALMDEMDALLQLVLRCGSAERMTYQEAFLNVLGVCPLEEEMRELKQVAATLGLSDIAEPEEDRDTLLQLLFSIGIEPKIGQITPAFVYDFPASQAALAKINPADPRVADRFEVYFKGIELANGFHELDNPAEQLARFKADNAKRLEMGLTEQPIDYHLIAALEAGLPECAGVALGIDRLIMLALGEDHIDKVTAFPFPRA.

Position 75–77 (75–77 (SPE)) interacts with substrate. Residues 99–101 (RNE) and N108 contribute to the ATP site. Residue Y117 participates in substrate binding. Residue 243 to 244 (EL) coordinates ATP. E250 contributes to the substrate binding site. An ATP-binding site is contributed by G299.

This sequence belongs to the class-II aminoacyl-tRNA synthetase family. EpmA subfamily. Homodimer.

The enzyme catalyses D-beta-lysine + L-lysyl-[protein] + ATP = N(6)-((3R)-3,6-diaminohexanoyl)-L-lysyl-[protein] + AMP + diphosphate + H(+). Functionally, with EpmB is involved in the beta-lysylation step of the post-translational modification of translation elongation factor P (EF-P). Catalyzes the ATP-dependent activation of (R)-beta-lysine produced by EpmB, forming a lysyl-adenylate, from which the beta-lysyl moiety is then transferred to the epsilon-amino group of a conserved specific lysine residue in EF-P. This Vibrio cholerae serotype O1 (strain ATCC 39315 / El Tor Inaba N16961) protein is Elongation factor P--(R)-beta-lysine ligase.